A 230-amino-acid chain; its full sequence is Ubiquitin carboxyl-terminal hydrolase isozyme L3 (230 aa).

Residues 5–229 (RWLPLEANPE…LRFNAIALSA (225 aa)) enclose the UCH catalytic domain. An interaction with ubiquitin region spans residues 8–13 (PLEANP). Residue Cys95 is the Nucleophile of the active site. Ser130 is modified (phosphoserine). Positions 152-159 (AHEGQTEA) are interaction with ubiquitin. Crossover loop which restricts access of large ubiquitin adducts to the active site. The active-site Proton donor is the His169. Residues 219-224 (ELRFNA) form an interaction with ubiquitin region.

This sequence belongs to the peptidase C12 family. In terms of assembly, preferentially binds diubiquitin; the interaction does not hydrolyze diubiquitin but, in vitro, inhibits the hydrolyzing activity on other substrates. Highly expressed in heart, skeletal muscle, and testis.

It localises to the cytoplasm. The catalysed reaction is Thiol-dependent hydrolysis of ester, thioester, amide, peptide and isopeptide bonds formed by the C-terminal Gly of ubiquitin (a 76-residue protein attached to proteins as an intracellular targeting signal).. Inhibited by monoubiquitin and diubiquitin. In terms of biological role, deubiquitinating enzyme (DUB) that controls levels of cellular ubiquitin through processing of ubiquitin precursors and ubiquitinated proteins. Thiol protease that recognizes and hydrolyzes a peptide bond at the C-terminal glycine of either ubiquitin or NEDD8. Has a 10-fold preference for Arg and Lys at position P3'', and exhibits a preference towards 'Lys-48'-linked ubiquitin chains. Deubiquitinates ENAC in apical compartments, thereby regulating apical membrane recycling. Indirectly increases the phosphorylation of IGFIR, AKT and FOXO1 and promotes insulin-signaling and insulin-induced adipogenesis. Required for stress-response retinal, skeletal muscle and germ cell maintenance. May be involved in working memory. Can hydrolyze UBB(+1), a mutated form of ubiquitin which is not effectively degraded by the proteasome and is associated with neurogenerative disorders. The sequence is that of Ubiquitin carboxyl-terminal hydrolase isozyme L3 (UCHL3) from Homo sapiens (Human).